The sequence spans 1019 residues: Alpha-mannosidase At3g26720 (1019 aa).

Positions 1 to 22 (MAVKCFSLYLILAAIVIGGVTS) are cleaved as a signal peptide. The Zn(2+) site is built by His47 and Asp49. Residue Asn64 is glycosylated (N-linked (GlcNAc...) asparagine). Asp169 serves as a coordination point for Zn(2+). Residues Asn278 and Asn336 are each glycosylated (N-linked (GlcNAc...) asparagine). Position 410 (His410) interacts with Zn(2+). Cys466 and Cys474 form a disulfide bridge. Asn470, Asn638, Asn730, and Asn820 each carry an N-linked (GlcNAc...) asparagine glycan. The cysteines at positions 824 and 829 are disulfide-linked.

Belongs to the glycosyl hydrolase 38 family. Homodimer. Zn(2+) serves as cofactor.

The catalysed reaction is Hydrolysis of terminal, non-reducing alpha-D-mannose residues in alpha-D-mannosides.. Its function is as follows. Liberates mannose from p-nitrophenyl-alpha-D-mannoside in vitro. This Arabidopsis thaliana (Mouse-ear cress) protein is Alpha-mannosidase At3g26720.